The sequence spans 158 residues: 6,7-dimethyl-8-ribityllumazine synthase (158 aa).

Residues phenylalanine 23, 61 to 63 (SFE), and 85 to 87 (AVI) contribute to the 5-amino-6-(D-ribitylamino)uracil site. (2S)-2-hydroxy-3-oxobutyl phosphate is bound at residue 90–91 (DT). The active-site Proton donor is the histidine 93. Position 118 (phenylalanine 118) interacts with 5-amino-6-(D-ribitylamino)uracil. Residue arginine 132 coordinates (2S)-2-hydroxy-3-oxobutyl phosphate.

Belongs to the DMRL synthase family.

It carries out the reaction (2S)-2-hydroxy-3-oxobutyl phosphate + 5-amino-6-(D-ribitylamino)uracil = 6,7-dimethyl-8-(1-D-ribityl)lumazine + phosphate + 2 H2O + H(+). The protein operates within cofactor biosynthesis; riboflavin biosynthesis; riboflavin from 2-hydroxy-3-oxobutyl phosphate and 5-amino-6-(D-ribitylamino)uracil: step 1/2. Catalyzes the formation of 6,7-dimethyl-8-ribityllumazine by condensation of 5-amino-6-(D-ribitylamino)uracil with 3,4-dihydroxy-2-butanone 4-phosphate. This is the penultimate step in the biosynthesis of riboflavin. This Prochlorococcus marinus (strain NATL2A) protein is 6,7-dimethyl-8-ribityllumazine synthase.